The sequence spans 137 residues: Peptide methionine sulfoxide reductase MsrB (137 aa).

The region spanning 9–131 (DAEWRAMLDD…NSASLRFDAT (123 aa)) is the MsrB domain. Zn(2+)-binding residues include Cys-48, Cys-51, Cys-97, and Cys-100. The active-site Nucleophile is the Cys-120.

Belongs to the MsrB Met sulfoxide reductase family. Zn(2+) is required as a cofactor.

It carries out the reaction L-methionyl-[protein] + [thioredoxin]-disulfide + H2O = L-methionyl-(R)-S-oxide-[protein] + [thioredoxin]-dithiol. This is Peptide methionine sulfoxide reductase MsrB from Herminiimonas arsenicoxydans.